Here is a 216-residue protein sequence, read N- to C-terminus: Regulator of G-protein signaling 19 (216 aa).

The span at 1–19 shows a compositional bias: basic and acidic residues; sequence MPTPHEAEKQHTGPEEADR. The interval 1 to 30 is disordered; that stretch reads MPTPHEAEKQHTGPEEADRPPSMSSHDAAP. Serine 24 bears the Phosphoserine; by CK2 mark. In terms of domain architecture, RGS spans 90-206; the sequence is SFDKLMHSPT…LTSPTYRSLL (117 aa). Serine 97 carries the post-translational modification Phosphoserine. Serine 151 is subject to Phosphoserine; by MAPK1 and MAPK3. Positions 207-216 are interaction with GIPC; the sequence is LQGAPQSSEA.

Interacts with GIPC PDZ domain. Interacts with GNAO1. Fatty acylated. Heavily palmitoylated in the cysteine string motif. Post-translationally, phosphorylated, mainly on serine residues.

It is found in the membrane. In terms of biological role, inhibits signal transduction by increasing the GTPase activity of G protein alpha subunits thereby driving them into their inactive GDP-bound form. Binds to G-alpha subfamily 1 members, predominantly to G(i)-alpha-3. Activity on G(z)-alpha is inhibited by phosphorylation and palmitoylation of the G-protein. The protein is Regulator of G-protein signaling 19 (Rgs19) of Rattus norvegicus (Rat).